We begin with the raw amino-acid sequence, 859 residues long: Rab effector MyRIP (859 aa).

One can recognise a RabBD domain in the interval 4–124 (KLDLSGLTDD…AQSLEWFYNN (121 aa)). Residues 63-105 (CCMRCCSPFTFLVNTKRQCGDCKFNVCKSCCSYQKHEKAWVCC) form an FYVE-type zinc finger. Residues 143–560 (RKHRLESGAC…LDTHQVSDDL (418 aa)) are myosin-binding. The tract at residues 193-209 (VALRVAEEAIEEAISKA) is PKA-binding. The tract at residues 232–248 (LTEELATTILQKIIRKQ) is negative regulation of PKA-binding. Positions 251-285 (KSEQQVEEEPGWPHPQSCSTKVADEGTSASPGGYR) are disordered. A Phosphoserine modification is found at S298. Disordered regions lie at residues 302–374 (EEAL…KPKS), 386–629 (VASA…SQSV), and 783–812 (DQKQ…KAEK). The segment covering 316-326 (QPRDQGQHPRA) has biased composition (basic and acidic residues). Phosphoserine is present on S350. The span at 393-403 (MGSDSEEDFDW) shows a compositional bias: acidic residues. Residues 435-450 (PIAASPSSALSPNPEA) show a composition bias toward low complexity. 2 stretches are compositionally biased toward basic and acidic residues: residues 484-494 (AAEKMRLHGEL) and 607-617 (SEPKTESENQK). An actin-binding region spans residues 495–856 (DVNFNPQLAS…DLMEPALESA (362 aa)). Polar residues-rich tracts occupy residues 618–629 (ESLSSEDNSQSV) and 787–796 (RTQVQTIDTS).

As to quaternary structure, binds MYO5A, MYO7A and F-actin. Binds RAB27A that has been activated by GTP-binding via its N-terminus. Interacts with PRKAR2A. Interacts with components of the exocyst complex, including EXOC3 and EXOC4. As to expression, detected in brain, skin, heart, adrenal medulla, pancreas, intestine, liver, kidney, muscle and testis.

It is found in the cytoplasm. It localises to the perinuclear region. Its subcellular location is the cytoplasmic vesicle. The protein localises to the secretory vesicle. In terms of biological role, rab effector protein involved in melanosome transport. Serves as link between melanosome-bound RAB27A and the motor proteins MYO5A and MYO7A. May link RAB27A-containing vesicles to actin filaments. Functions as a protein kinase A-anchoring protein (AKAP). May act as a scaffolding protein that links PKA to components of the exocytosis machinery, thus facilitating exocytosis, including insulin release. The protein is Rab effector MyRIP (MYRIP) of Homo sapiens (Human).